We begin with the raw amino-acid sequence, 352 residues long: C-C chemokine receptor type 5 (352 aa).

The Extracellular portion of the chain corresponds to Met-1 to Ala-30. Tyr-3 carries the post-translational modification Sulfotyrosine. O-linked (GalNAc...) serine glycans are attached at residues Ser-6 and Ser-7. A sulfotyrosine mark is found at Tyr-10, Tyr-14, and Tyr-15. Disulfide bonds link Cys-20–Cys-269 and Cys-101–Cys-178. The chain crosses the membrane as a helical span at residues Arg-31–Cys-58. Residues Lys-59–Tyr-68 are Cytoplasmic-facing. The helical transmembrane segment at Leu-69–Tyr-89 threads the bilayer. Residues Ala-90–Gln-102 are Extracellular-facing. Residues Leu-103 to Ile-124 traverse the membrane as a helical segment. At Asp-125 to Thr-141 the chain is on the cytoplasmic side. The helical transmembrane segment at Val-142–Phe-166 threads the bilayer. Topologically, residues Thr-167–Ile-198 are extracellular. A helical transmembrane segment spans residues Val-199–Leu-218. At Lys-219 to Arg-235 the chain is on the cytoplasmic side. The chain crosses the membrane as a helical span at residues Leu-236–Phe-260. Topologically, residues Gln-261 to Gln-277 are extracellular. A helical membrane pass occupies residues Ala-278 to Gly-301. Over Glu-302–Leu-352 the chain is Cytoplasmic. 3 S-palmitoyl cysteine lipidation sites follow: Cys-321, Cys-323, and Cys-324. Phosphoserine; by BARK1 is present on residues Ser-336, Ser-337, and Ser-349.

Belongs to the G-protein coupled receptor 1 family. As to quaternary structure, interacts with PRAF2. Efficient ligand binding to CCL3/MIP-1alpha and CCL4/MIP-1beta requires sulfation, O-glycosylation and sialic acid modifications. Glycosylation on Ser-6 is required for efficient binding of CCL4. Interacts with GRK2. Interacts with ARRB1 and ARRB2. Interacts with CNIH4. Interacts with S100A4; this interaction stimulates T-lymphocyte chemotaxis. Post-translationally, sulfated on at least 2 of the N-terminal tyrosines. Sulfation is required for efficient binding of the chemokines, CCL3 and CCL4. In terms of processing, palmitoylation in the C-terminal is important for cell surface expression. Phosphorylation on serine residues in the C-terminal is stimulated by binding CC chemokines especially by APO-RANTES. Post-translationally, O-glycosylated, but not N-glycosylated. Ser-6 appears to be the major site even if Ser-7 may be also O-glycosylated. Also sialylated glycans present which contribute to chemokine binding. Thr-16 and Ser-17 may also be glycosylated and, if so, with small moieties such as a T-antigen.

Its subcellular location is the cell membrane. In terms of biological role, receptor for a number of inflammatory CC-chemokines including CCL3/MIP-1-alpha, CCL4/MIP-1-beta and RANTES and subsequently transduces a signal by increasing the intracellular calcium ion level. May play a role in the control of granulocytic lineage proliferation or differentiation. Participates in T-lymphocyte migration to the infection site by acting as a chemotactic receptor. This chain is C-C chemokine receptor type 5 (CCR5), found in Mandrillus leucophaeus (Drill).